The following is a 126-amino-acid chain: Large ribosomal subunit protein bL12 (126 aa).

This sequence belongs to the bacterial ribosomal protein bL12 family. As to quaternary structure, homodimer. Part of the ribosomal stalk of the 50S ribosomal subunit. Forms a multimeric L10(L12)X complex, where L10 forms an elongated spine to which 2 to 4 L12 dimers bind in a sequential fashion. Binds GTP-bound translation factors.

Its function is as follows. Forms part of the ribosomal stalk which helps the ribosome interact with GTP-bound translation factors. Is thus essential for accurate translation. This is Large ribosomal subunit protein bL12 from Beijerinckia indica subsp. indica (strain ATCC 9039 / DSM 1715 / NCIMB 8712).